We begin with the raw amino-acid sequence, 338 residues long: Glutamyl-tRNA reductase (338 aa).

Substrate is bound by residues T50–R53, S102, E107–E109, and Q113. C51 serves as the catalytic Nucleophile. G181–N186 lines the NADP(+) pocket.

Belongs to the glutamyl-tRNA reductase family. In terms of assembly, homodimer.

It carries out the reaction (S)-4-amino-5-oxopentanoate + tRNA(Glu) + NADP(+) = L-glutamyl-tRNA(Glu) + NADPH + H(+). It participates in porphyrin-containing compound metabolism; protoporphyrin-IX biosynthesis; 5-aminolevulinate from L-glutamyl-tRNA(Glu): step 1/2. Catalyzes the NADPH-dependent reduction of glutamyl-tRNA(Glu) to glutamate 1-semialdehyde (GSA). The chain is Glutamyl-tRNA reductase from Chlamydia caviae (strain ATCC VR-813 / DSM 19441 / 03DC25 / GPIC) (Chlamydophila caviae).